Here is a 229-residue protein sequence, read N- to C-terminus: Cytochrome c oxidase subunit 2 (229 aa).

The Mitochondrial intermembrane portion of the chain corresponds to 1–26 (MATWSNLGLQDSASPLMEQLNFFHDH). A helical transmembrane segment spans residues 27–48 (TLLILIMITILVGYLMLMLFFN). The Mitochondrial matrix portion of the chain corresponds to 49–62 (KFTNRFLLHGQTIE). A helical membrane pass occupies residues 63-82 (IIWTILPAIVLMFIALPSLR). Residues 83 to 229 (ILYLLDEINS…IKWITAMNSN (147 aa)) are Mitochondrial intermembrane-facing. Residues H161, C196, E198, C200, H204, and M207 each contribute to the Cu cation site. E198 lines the Mg(2+) pocket.

Belongs to the cytochrome c oxidase subunit 2 family. In terms of assembly, component of the cytochrome c oxidase (complex IV, CIV), a multisubunit enzyme composed of a catalytic core of 3 subunits and several supernumerary subunits. The complex exists as a monomer or a dimer and forms supercomplexes (SCs) in the inner mitochondrial membrane with ubiquinol-cytochrome c oxidoreductase (cytochrome b-c1 complex, complex III, CIII). It depends on Cu cation as a cofactor.

The protein localises to the mitochondrion inner membrane. The enzyme catalyses 4 Fe(II)-[cytochrome c] + O2 + 8 H(+)(in) = 4 Fe(III)-[cytochrome c] + 2 H2O + 4 H(+)(out). In terms of biological role, component of the cytochrome c oxidase, the last enzyme in the mitochondrial electron transport chain which drives oxidative phosphorylation. The respiratory chain contains 3 multisubunit complexes succinate dehydrogenase (complex II, CII), ubiquinol-cytochrome c oxidoreductase (cytochrome b-c1 complex, complex III, CIII) and cytochrome c oxidase (complex IV, CIV), that cooperate to transfer electrons derived from NADH and succinate to molecular oxygen, creating an electrochemical gradient over the inner membrane that drives transmembrane transport and the ATP synthase. Cytochrome c oxidase is the component of the respiratory chain that catalyzes the reduction of oxygen to water. Electrons originating from reduced cytochrome c in the intermembrane space (IMS) are transferred via the dinuclear copper A center (CU(A)) of subunit 2 and heme A of subunit 1 to the active site in subunit 1, a binuclear center (BNC) formed by heme A3 and copper B (CU(B)). The BNC reduces molecular oxygen to 2 water molecules using 4 electrons from cytochrome c in the IMS and 4 protons from the mitochondrial matrix. The chain is Cytochrome c oxidase subunit 2 (COII) from Simulium vittatum (Striped black fly).